Reading from the N-terminus, the 159-residue chain is Phosphopantetheine adenylyltransferase (159 aa).

An ATP-binding site is contributed by H16. K40, M72, and R86 together coordinate substrate. Residues 87-89, E97, and 122-128 contribute to the ATP site; these read GLR and YQYLSAS.

This sequence belongs to the bacterial CoaD family. As to quaternary structure, homohexamer. Mg(2+) serves as cofactor.

The protein localises to the cytoplasm. It catalyses the reaction (R)-4'-phosphopantetheine + ATP + H(+) = 3'-dephospho-CoA + diphosphate. Its pathway is cofactor biosynthesis; coenzyme A biosynthesis; CoA from (R)-pantothenate: step 4/5. Functionally, reversibly transfers an adenylyl group from ATP to 4'-phosphopantetheine, yielding dephospho-CoA (dPCoA) and pyrophosphate. This Dehalococcoides mccartyi (strain ATCC BAA-2100 / JCM 16839 / KCTC 5957 / BAV1) protein is Phosphopantetheine adenylyltransferase.